The sequence spans 88 residues: HssA/B-like protein 19 (88 aa).

The protein belongs to the hssA/B family.

The polypeptide is HssA/B-like protein 19 (hssl19) (Dictyostelium discoideum (Social amoeba)).